The primary structure comprises 184 residues: Protein PLANT CADMIUM RESISTANCE 4 (184 aa).

The span at 1-10 shows a compositional bias: polar residues; that stretch reads MGRPGSQPNE. Residues 1-21 form a disordered region; that stretch reads MGRPGSQPNEAQPPPVQVQPT. A helical membrane pass occupies residues 96-116; that stretch reads GGLLYGMIFFIGVPFVYSCMF.

The protein belongs to the cornifelin family.

The protein resides in the membrane. Its function is as follows. May be involved in heavy metals transport. This is Protein PLANT CADMIUM RESISTANCE 4 (PCR4) from Arabidopsis thaliana (Mouse-ear cress).